Reading from the N-terminus, the 237-residue chain is MNVKKAVVVFSGGQDSTTCLVQALAHYDEVHAITFDYGQRHREEIETARRLATQFGIAAHKVMDVTLLNELAVSALTRDEIPVSGELQDNGLPNTFVPGRNILFLTLASIYAYQVGAEAVITGVCETDFSGYPDCRDEFVKSLNQAVSLGLDRCIRFETPLMWLDKAETWALADYYGHLETVRQQTLTCYNGIAGDGCGTCPACELRSRGLDLYLADKAGIMARLYEKTGLCEKSVL.

10 to 20 provides a ligand contact to ATP; the sequence is FSGGQDSTTCL. The Zn(2+) site is built by C189, C198, C201, and C204.

It belongs to the QueC family. The cofactor is Zn(2+).

The catalysed reaction is 7-carboxy-7-deazaguanine + NH4(+) + ATP = 7-cyano-7-deazaguanine + ADP + phosphate + H2O + H(+). The protein operates within purine metabolism; 7-cyano-7-deazaguanine biosynthesis. Functionally, catalyzes the ATP-dependent conversion of 7-carboxy-7-deazaguanine (CDG) to 7-cyano-7-deazaguanine (preQ(0)). The polypeptide is 7-cyano-7-deazaguanine synthase (Aeromonas salmonicida (strain A449)).